Consider the following 151-residue polypeptide: Putative superoxide dismutase [Cu-Zn] (151 aa).

Positions 43, 45, and 60 each coordinate Cu cation. The cysteines at positions 54 and 144 are disulfide-linked. The Zn(2+) site is built by His60, His68, His77, and Asp80. A Cu cation-binding site is contributed by His118.

It belongs to the Cu-Zn superoxide dismutase family. The cofactor is Cu cation. It depends on Zn(2+) as a cofactor.

It catalyses the reaction 2 superoxide + 2 H(+) = H2O2 + O2. In terms of biological role, nonessential for normal virus replication. Could be either non-functional or with a low activity. The sequence is that of Putative superoxide dismutase [Cu-Zn] (SOD) from Lepidoptera (butterflies and moths).